The chain runs to 230 residues: Urease accessory protein UreE (230 aa).

Positions 197 to 230 (LHIHAIHSHGDGDSHNHDHDHSHSHGDHDHDHKH) are disordered. The span at 204 to 230 (SHGDGDSHNHDHDHSHSHGDHDHDHKH) shows a compositional bias: basic and acidic residues.

Belongs to the UreE family.

It is found in the cytoplasm. In terms of biological role, involved in urease metallocenter assembly. Binds nickel. Probably functions as a nickel donor during metallocenter assembly. This Yersinia aldovae protein is Urease accessory protein UreE.